The primary structure comprises 290 residues: MSDTEQELQRVIRRHYREKRELQAHIQTLKASVPKNDKGRRKQMLADISRLEAEMEQRHKQELEKFGENPDSSVDSVTADLEKMNLENMPPRPPKAQKRRDRRAHQERRHQERMPAAQAEQLAANRREEEEKVAAILGAKNLEMKTIPADGHCMYRAIQDQLVFSVTIESLRYRTAYYMRKHIDDFLPFFTEPEAGNFYTREDFLRYCDDIVHNASWGGQLELRALSHVLQTPIEVVQANSPTIVIGEEYTRKPVTLVYLHYACDFGEHYNSVKPIEVAGAFGGMAPRLF.

The tract at residues 27–117 (QTLKASVPKN…RRHQERMPAA (91 aa)) is disordered. Over residues 49-68 (SRLEAEMEQRHKQELEKFGE) the composition is skewed to basic and acidic residues. Over residues 95–108 (KAQKRRDRRAHQER) the composition is skewed to basic residues. An OTU domain is found at 142–276 (LEMKTIPADG…GEHYNSVKPI (135 aa)). The tract at residues 147-153 (IPADGHC) is cys-loop. Residue aspartate 150 is part of the active site. The active-site Nucleophile is cysteine 153. The tract at residues 211-221 (IVHNASWGGQL) is variable-loop. Positions 259–269 (YLHYACDFGEH) are his-loop. Histidine 269 is a catalytic residue.

The catalysed reaction is Thiol-dependent hydrolysis of ester, thioester, amide, peptide and isopeptide bonds formed by the C-terminal Gly of ubiquitin (a 76-residue protein attached to proteins as an intracellular targeting signal).. Its function is as follows. Deubiquitinating enzyme that hydrolyzes 'Lys-27'-, 'Lys-29'- and 'Lys-33'-linked polyubiquitin chains. Also able to hydrolyze 'Lys-11'-linked ubiquitin chains. This chain is OTU domain-containing protein 6A (Otud6a), found in Mus musculus (Mouse).